Consider the following 165-residue polypeptide: PTS system glucose-specific EIIA component (165 aa).

The 105-residue stretch at 33 to 137 (DPVFAGRMMG…STITPIVITN (105 aa)) folds into the PTS EIIA type-1 domain. Zn(2+) is bound by residues His-70 and His-85. His-85 functions as the Tele-phosphohistidine intermediate; for EIIA activity in the catalytic mechanism. Residue His-85 is modified to Phosphohistidine; by HPr.

In terms of assembly, heterodimer with glycerol kinase (glpk). Zn(2+) serves as cofactor.

The protein localises to the cytoplasm. Its function is as follows. The phosphoenolpyruvate-dependent sugar phosphotransferase system (sugar PTS), a major carbohydrate active transport system, catalyzes the phosphorylation of incoming sugar substrates concomitantly with their translocation across the cell membrane. The enzyme II complex composed of PtsG and Crr is involved in glucose transport. In Bacillus cereus (strain ATCC 14579 / DSM 31 / CCUG 7414 / JCM 2152 / NBRC 15305 / NCIMB 9373 / NCTC 2599 / NRRL B-3711), this protein is PTS system glucose-specific EIIA component (crr).